Consider the following 428-residue polypeptide: Serine--tRNA ligase (428 aa).

231-233 (TAE) is an L-serine binding site. ATP is bound at residue 262–264 (RSE). E285 serves as a coordination point for L-serine. Residue 349–352 (EISS) coordinates ATP. S385 contacts L-serine.

This sequence belongs to the class-II aminoacyl-tRNA synthetase family. Type-1 seryl-tRNA synthetase subfamily. As to quaternary structure, homodimer. The tRNA molecule binds across the dimer.

It is found in the cytoplasm. The enzyme catalyses tRNA(Ser) + L-serine + ATP = L-seryl-tRNA(Ser) + AMP + diphosphate + H(+). The catalysed reaction is tRNA(Sec) + L-serine + ATP = L-seryl-tRNA(Sec) + AMP + diphosphate + H(+). Its pathway is aminoacyl-tRNA biosynthesis; selenocysteinyl-tRNA(Sec) biosynthesis; L-seryl-tRNA(Sec) from L-serine and tRNA(Sec): step 1/1. Its function is as follows. Catalyzes the attachment of serine to tRNA(Ser). Is also able to aminoacylate tRNA(Sec) with serine, to form the misacylated tRNA L-seryl-tRNA(Sec), which will be further converted into selenocysteinyl-tRNA(Sec). The protein is Serine--tRNA ligase of Staphylococcus aureus (strain bovine RF122 / ET3-1).